A 382-amino-acid polypeptide reads, in one-letter code: Nitric oxide reductase FlRd-NAD(+) reductase (382 aa).

The protein belongs to the FAD-dependent oxidoreductase family. Requires FAD as cofactor.

It is found in the cytoplasm. The catalysed reaction is 2 reduced [nitric oxide reductase rubredoxin domain] + NAD(+) + H(+) = 2 oxidized [nitric oxide reductase rubredoxin domain] + NADH. It participates in nitrogen metabolism; nitric oxide reduction. Its function is as follows. One of at least two accessory proteins for anaerobic nitric oxide (NO) reductase. Reduces the rubredoxin moiety of NO reductase. The sequence is that of Nitric oxide reductase FlRd-NAD(+) reductase from Vibrio vulnificus (strain YJ016).